The sequence spans 195 residues: FK506-binding protein 2 (195 aa).

The signal sequence occupies residues 1-19; that stretch reads MKAALFLSALASTAVGVVA. Residues 39–127 form the PPIase FKBP-type domain; that stretch reads GDGVHMHYRG…VFETELVGID (89 aa). A Prevents secretion from ER motif is present at residues 192–195; sequence HEEL.

Belongs to the FKBP-type PPIase family. FKBP2 subfamily.

Its subcellular location is the endoplasmic reticulum. The catalysed reaction is [protein]-peptidylproline (omega=180) = [protein]-peptidylproline (omega=0). Its activity is regulated as follows. Inhibited by both FK506 and rapamycin. In terms of biological role, PPIases accelerate the folding of proteins. It catalyzes the cis-trans isomerization of proline imidic peptide bonds in oligopeptides. The polypeptide is FK506-binding protein 2 (FPR2) (Gibberella zeae (strain ATCC MYA-4620 / CBS 123657 / FGSC 9075 / NRRL 31084 / PH-1) (Wheat head blight fungus)).